The chain runs to 394 residues: Exodeoxyribonuclease 7 large subunit (394 aa).

Belongs to the XseA family. As to quaternary structure, heterooligomer composed of large and small subunits.

The protein resides in the cytoplasm. The catalysed reaction is Exonucleolytic cleavage in either 5'- to 3'- or 3'- to 5'-direction to yield nucleoside 5'-phosphates.. Functionally, bidirectionally degrades single-stranded DNA into large acid-insoluble oligonucleotides, which are then degraded further into small acid-soluble oligonucleotides. The sequence is that of Exodeoxyribonuclease 7 large subunit from Thermotoga petrophila (strain ATCC BAA-488 / DSM 13995 / JCM 10881 / RKU-1).